The following is a 442-amino-acid chain: Thymidine phosphorylase (442 aa).

The protein belongs to the thymidine/pyrimidine-nucleoside phosphorylase family. Homodimer.

The catalysed reaction is thymidine + phosphate = 2-deoxy-alpha-D-ribose 1-phosphate + thymine. It participates in pyrimidine metabolism; dTMP biosynthesis via salvage pathway; dTMP from thymine: step 1/2. The enzymes which catalyze the reversible phosphorolysis of pyrimidine nucleosides are involved in the degradation of these compounds and in their utilization as carbon and energy sources, or in the rescue of pyrimidine bases for nucleotide synthesis. This Pectobacterium atrosepticum (strain SCRI 1043 / ATCC BAA-672) (Erwinia carotovora subsp. atroseptica) protein is Thymidine phosphorylase.